Here is a 567-residue protein sequence, read N- to C-terminus: Nucleolus and neural progenitor protein (567 aa).

Residue S265 is modified to Phosphoserine. Residues S437–P457 are disordered. Residues R442–K460 form a nuclear localization signal region.

The protein belongs to the nepro family.

Its subcellular location is the nucleus. It is found in the nucleolus. In terms of biological role, may play a role in cortex development as part of the Notch signaling pathway. Downstream of Notch may repress the expression of proneural genes and inhibit neuronal differentiation thereby maintaining neural progenitors. May also play a role in preimplentation embryo development. This is Nucleolus and neural progenitor protein from Homo sapiens (Human).